A 324-amino-acid polypeptide reads, in one-letter code: Autolytic lysozyme (324 aa).

Active-site residues include D5 and E91. Repeat copies occupy residues 212-234 (LLKRGLEVDGIEGPETEAAIKDF), 235-254 (QSIMGLTVDGIWGTNTSGAA), 255-277 (QQIFSRPLDGVAYPHYEYATRYI), 278-300 (QYRVGASVDGTFGSGTKAKVAAW), and 301-324 (QSNQGLMADGVVGSATWSKLLDEN). The tract at residues 212–324 (LLKRGLEVDG…ATWSKLLDEN (113 aa)) is 5 X 23 AA tandem repeats.

Belongs to the glycosyl hydrolase 25 family. As to quaternary structure, monomer.

The protein localises to the secreted. The protein resides in the cytoplasm. It carries out the reaction Hydrolysis of (1-&gt;4)-beta-linkages between N-acetylmuramic acid and N-acetyl-D-glucosamine residues in a peptidoglycan and between N-acetyl-D-glucosamine residues in chitodextrins.. This is Autolytic lysozyme (lyc) from Clostridium acetobutylicum (strain ATCC 824 / DSM 792 / JCM 1419 / IAM 19013 / LMG 5710 / NBRC 13948 / NRRL B-527 / VKM B-1787 / 2291 / W).